The primary structure comprises 352 residues: DNA polymerase IV (352 aa).

A UmuC domain is found at 4–185; sequence IIHVDMDCFF…LPLSKIPGVG (182 aa). Residues D8 and D103 each contribute to the Mg(2+) site. The active site involves E104.

The protein belongs to the DNA polymerase type-Y family. Monomer. Mg(2+) serves as cofactor.

The protein resides in the cytoplasm. It catalyses the reaction DNA(n) + a 2'-deoxyribonucleoside 5'-triphosphate = DNA(n+1) + diphosphate. In terms of biological role, poorly processive, error-prone DNA polymerase involved in untargeted mutagenesis. Copies undamaged DNA at stalled replication forks, which arise in vivo from mismatched or misaligned primer ends. These misaligned primers can be extended by PolIV. Exhibits no 3'-5' exonuclease (proofreading) activity. May be involved in translesional synthesis, in conjunction with the beta clamp from PolIII. The polypeptide is DNA polymerase IV (Yersinia pseudotuberculosis serotype O:1b (strain IP 31758)).